A 754-amino-acid polypeptide reads, in one-letter code: Nibrin (754 aa).

Residues 24-83 (YVVGRKNCAILIEKDQSISRNHAVLTANFSVTNLSQTDEIPVLALKDNSKYGTFVNEEKM) form the FHA domain. 2 consecutive BRCT domains span residues 105–181 (KFRI…TEFL) and 224–315 (GKTF…LAVI). Residues 111–328 (EPLVACSSCL…TKNYCDPQGH (218 aa)) form a mediates interaction with SP100 region. The segment at 221-402 (IFKGKTFIFL…FRMLSQDAPT (182 aa)) is interaction with MTOR, MAPKAP1 and RICTOR. Position 278 is a phosphoserine; by ATM (Ser278). The segment at 326 to 346 (QGHPSTGLKTTTPGPSLSQGL) is disordered. Positions 328–346 (HPSTGLKTTTPGPSLSQGL) are enriched in polar residues. The residue at position 337 (Thr337) is a Phosphothreonine. Ser343 carries the phosphoserine; by ATM modification. A Phosphoserine modification is found at Ser347. Position 388 is an N6-lactoyllysine (Lys388). 2 disordered regions span residues 396 to 415 (LSQDAPTVKESCKTSSNNNS) and 431 to 475 (LSPT…NQEM). Residue Ser397 is modified to Phosphoserine. Thr402 is subject to Phosphothreonine. Composition is skewed to polar residues over residues 431-440 (LSPTKLPSIN) and 447-462 (SQQQQTNSIRNYFQPS). Ser432 carries the phosphoserine modification. Lys435 participates in a covalent cross-link: Glycyl lysine isopeptide (Lys-Gly) (interchain with G-Cter in ubiquitin). Residues 461–467 (PSTKKRE) carry the Nuclear localization signal motif. A phosphoserine mark is found at Ser509 and Ser518. Glycyl lysine isopeptide (Lys-Gly) (interchain with G-Cter in SUMO2) cross-links involve residues Lys571 and Lys582. Phosphoserine is present on residues Ser615 and Ser673. Residues Lys686, Lys690, and Lys735 each participate in a glycyl lysine isopeptide (Lys-Gly) (interchain with G-Cter in ubiquitin) cross-link. Residues 740-749 (ADDLFRYNPY) carry the FxF/Y motif motif.

It belongs to the Nibrin family. In terms of assembly, component of the MRN complex composed of two heterodimers RAD50 and MRE11 associated with a single NBN. The MRN complexes dimerize on DNA to form joined MRN-MRN oligomers required for DNA double-strand break repair. The MRN complexes dimerize on DNA to form joined MRN-MRN oligomers required for DNA double-strand break repair. As part of the MRN complex, interacts with MCM9; the interaction recruits the complex to DNA repair sites. Component of the BASC complex, at least composed of BRCA1, MSH2, MSH6, MLH1, ATM, BLM, RAD50, MRE11 and NBN. Interacts with histone H2AX; this requires phosphorylation of H2AX on 'Ser-139' and promotes NBN recruitment to DNA damage sites. Interacts with (phosphorylated) MDC1; promoting NBN recruitment to DNA damage sites. Interacts with (phosphorylated) RAD17; promoting NBN recruitment to DNA damage sites. Interacts (via FxF/Y motif) with ATM. Interacts with HJURP. Interacts with INTS3. Interacts with KPNA2. Interacts with TERF2; interaction is disrupted upon NBN phosphorylation by CDK2. Interacts with (phosphorylated) RBBP8/CtIP; the interaction links the role of the MRN complex in DNA double-strand break sensing to resection. Interacts with SP100; recruits NBN to PML bodies. Interacts with ATF2. Interacts with MTOR, MAPKAP1 isoform 2 and RICTOR; indicative for an association with the mTORC2 complex. Interacts with MRNIP. Interacts with UFL1; promoting UFL1 recruitment to double-strand breaks following DNA damage. Interacts with CYREN (via XLF motif). Post-translationally, phosphorylated by ATM in response of ionizing radiation, and such phosphorylation is responsible intra-S phase checkpoint control and telomere maintenance. Phosphorylated at Ser-432 by CDK2 in S/G2 phases abolishes interaction with TERF2, enabling DCLRE1B/Apollo recruitment to telomeres. Phosphorylation at Ser-432 in response to dysfunctional telomeres promotes non-homologous end joining repair at telomeres, while dephosphorylation by PPP1CA promotes microhomology-mediated end-joining (MMEJ) repair. Ubiquitinated at Lys-435 via 'Lys-6'-linked ubiquitin chains by RNF8, promoting NBN recruitment to DNA double-strand breaks (DSBs). Ubiquitinated at Lys-686 and Lys-689 via 'Lys-63'-linked ubiquitin chains by PELI1: ubiquitination takes place following PELI1 phosphorylation and promotes ATM activation and DNA repair. Ubiquitinated at Lys-735 via 'Lys-63'-linked ubiquitin chains by the SCF(SKP2) complex: ubiquitination takes place following SKP2 phosphorylation and promotes ATM activation and DNA repair. In terms of processing, lactylation at Lys-388 by KAT5 in response to DNA damage promotes recruitment of the MRN complex to DNA damage sites. Delactylated by HDAC3.

Its subcellular location is the nucleus. It is found in the chromosome. The protein localises to the PML body. The protein resides in the telomere. Functionally, component of the MRN complex, which plays a central role in double-strand break (DSB) repair, DNA recombination, maintenance of telomere integrity and meiosis. The MRN complex is involved in the repair of DNA double-strand breaks (DSBs) via homologous recombination (HR), an error-free mechanism which primarily occurs during S and G2 phases. The complex (1) mediates the end resection of damaged DNA, which generates proper single-stranded DNA, a key initial steps in HR, and is (2) required for the recruitment of other repair factors and efficient activation of ATM and ATR upon DNA damage. The MRN complex possesses single-strand endonuclease activity and double-strand-specific 3'-5' exonuclease activity, which are provided by MRE11, to initiate end resection, which is required for single-strand invasion and recombination. Within the MRN complex, NBN acts as a protein-protein adapter, which specifically recognizes and binds phosphorylated proteins, promoting their recruitment to DNA damage sites. Recruits MRE11 and RAD50 components of the MRN complex to DSBs in response to DNA damage. Promotes the recruitment of PI3/PI4-kinase family members ATM, ATR, and probably DNA-PKcs to the DNA damage sites, activating their functions. Mediates the recruitment of phosphorylated RBBP8/CtIP to DSBs, leading to cooperation between the MRN complex and RBBP8/CtIP to initiate end resection. RBBP8/CtIP specifically promotes the endonuclease activity of the MRN complex to clear DNA ends containing protein adducts. The MRN complex is also required for the processing of R-loops. NBN also functions in telomere length maintenance via its interaction with TERF2: interaction with TERF2 during G1 phase preventing recruitment of DCLRE1B/Apollo to telomeres. NBN also promotes DNA repair choice at dysfunctional telomeres: NBN phosphorylation by CK2 promotes non-homologous end joining repair at telomeres, while unphosphorylated NBN promotes microhomology-mediated end-joining (MMEJ) repair. Enhances AKT1 phosphorylation possibly by association with the mTORC2 complex. In Pongo abelii (Sumatran orangutan), this protein is Nibrin (NBN).